We begin with the raw amino-acid sequence, 63 residues long: ORF6 protein (63 aa).

It belongs to the coronaviruses accessory protein 6 family.

The protein localises to the host endoplasmic reticulum membrane. It is found in the host Golgi apparatus membrane. Its function is as follows. Could be a determinant of virus virulence. Seems to stimulate cellular DNA synthesis in vitro. In Bat coronavirus HKU3 (BtCoV), this protein is ORF6 protein.